The chain runs to 674 residues: Inorganic pyrophosphatase TTM2 (674 aa).

The CYTH domain occupies serine 248–leucine 410. 2 disordered regions span residues lysine 457–asparagine 498 and arginine 619–serine 640. Positions serine 484 to proline 496 are enriched in basic and acidic residues. Residues alanine 623–serine 640 show a composition bias toward low complexity. The helical transmembrane segment at leucine 650–isoleucine 670 threads the bilayer.

Mg(2+) is required as a cofactor. As to expression, predominantly expressed in the shoot apices of inflorescences.

The protein localises to the mitochondrion outer membrane. It carries out the reaction diphosphate + H2O = 2 phosphate + H(+). Exhibits pyrophosphatase activity with stronger affinity for pyrophosphate (PPi), moderate affinity for ATP and ADP, and weak affinity for tripolyphosphate (PPPi). No activity observed toward uridine substrate. Negative regulator of the salicylic acid (SA)-mediated amplification of defense responses against both virulent and avirulent pathogens, including oomycetes (e.g. H.arabidopsidis) and bacteria (e.g. P.syringae). Represses systemic acquired resistance (SAR). The protein is Inorganic pyrophosphatase TTM2 of Arabidopsis thaliana (Mouse-ear cress).